The primary structure comprises 403 residues: Large ribosomal subunit protein uL3 (403 aa).

The interval 1–37 is disordered; that stretch reads MSHRKFSAPRHGSLGFLPRKRSSRHRGKVKSFPKDDP. The residue at position 13 (S13) is a Phosphoserine. Residues 18–31 show a composition bias toward basic residues; the sequence is PRKRSSRHRGKVKS. K39 participates in a covalent cross-link: Glycyl lysine isopeptide (Lys-Gly) (interchain with G-Cter in SUMO2). K136 carries the post-translational modification N6-acetyllysine. Glycyl lysine isopeptide (Lys-Gly) (interchain with G-Cter in SUMO2) cross-links involve residues K224 and K226. Position 245 is a tele-methylhistidine (H245). N6-acetyllysine; alternate occurs at positions 286 and 294. A Glycyl lysine isopeptide (Lys-Gly) (interchain with G-Cter in SUMO2); alternate cross-link involves residue K286. K294 is covalently cross-linked (Glycyl lysine isopeptide (Lys-Gly) (interchain with G-Cter in SUMO1); alternate). S304 carries the post-translational modification Phosphoserine. K366 carries the post-translational modification N6-acetyllysine; alternate. K366 participates in a covalent cross-link: Glycyl lysine isopeptide (Lys-Gly) (interchain with G-Cter in SUMO2); alternate. K373 carries the post-translational modification N6-acetyllysine. Residues K386, K393, and K399 each participate in a glycyl lysine isopeptide (Lys-Gly) (interchain with G-Cter in SUMO2) cross-link.

This sequence belongs to the universal ribosomal protein uL3 family. As to quaternary structure, component of the large ribosomal subunit. Interacts with DHX33. Post-translationally, constitutively monomethylated at His-245 by METTL18. Methylation at His-245 regulates translation elongation by slowing ribosome traversal on tyrosine codons: slower elongation provides enough time for proper folding of synthesized proteins and prevents cellular aggregation of tyrosine-rich proteins. It is not required for incorporation of RPL3 into ribosomes.

Its subcellular location is the nucleus. The protein localises to the nucleolus. It is found in the cytoplasm. Functionally, component of the large ribosomal subunit. The ribosome is a large ribonucleoprotein complex responsible for the synthesis of proteins in the cell. This chain is Large ribosomal subunit protein uL3 (RPL3), found in Oryctolagus cuniculus (Rabbit).